The primary structure comprises 238 residues: tRNA1(Val) (adenine(37)-N6)-methyltransferase (238 aa).

It belongs to the methyltransferase superfamily. tRNA (adenine-N(6)-)-methyltransferase family.

The protein resides in the cytoplasm. It carries out the reaction adenosine(37) in tRNA1(Val) + S-adenosyl-L-methionine = N(6)-methyladenosine(37) in tRNA1(Val) + S-adenosyl-L-homocysteine + H(+). Specifically methylates the adenine in position 37 of tRNA(1)(Val) (anticodon cmo5UAC). This is tRNA1(Val) (adenine(37)-N6)-methyltransferase from Shewanella baltica (strain OS185).